The primary structure comprises 235 residues: Isoprenyl transferase (235 aa).

The active site involves aspartate 21. Position 21 (aspartate 21) interacts with Mg(2+). Substrate-binding positions include 22 to 25 (GNAR), tryptophan 26, lysine 34, histidine 38, and 66 to 68 (SSE). The active-site Proton acceptor is the asparagine 69. Residues tryptophan 70, arginine 72, arginine 183, and 189–191 (RIS) each bind substrate. Residue glutamate 202 participates in Mg(2+) binding.

Belongs to the UPP synthase family. As to quaternary structure, homodimer. It depends on Mg(2+) as a cofactor.

Its function is as follows. Catalyzes the condensation of isopentenyl diphosphate (IPP) with allylic pyrophosphates generating different type of terpenoids. The polypeptide is Isoprenyl transferase (Rickettsia conorii (strain ATCC VR-613 / Malish 7)).